A 1911-amino-acid chain; its full sequence is Adenylate kinase 9 (1911 aa).

The adenylate kinase 1 stretch occupies residues 31 to 285 (VCFVVFGKPG…LFMIVMDRLK (255 aa)). 40-45 (GVGKTT) serves as a coordination point for ATP. Residues 60-89 (EALPILEEQIAAETESGVMLQSMLISGQSI) form an NMP 1 region. Residues 87–89 (QSI) and 116–119 (EIPS) contribute to the AMP site. The tract at residues 160–205 (GQRQHNNTGYIYSRDQWDPEVIENHRKKKKEAQKDGKGEEEEEEEE) is LID 1. The tract at residues 185 to 210 (RKKKKEAQKDGKGEEEEEEEEQEEEE) is disordered. Over residues 197-210 (GEEEEEEEEQEEEE) the composition is skewed to acidic residues. Position 229 (R229) interacts with AMP. 2 coiled-coil regions span residues 443-485 (AEAT…EFGV) and 676-711 (LQKK…TEEE). 2 disordered regions span residues 728–796 (KAKE…TEIP) and 892–926 (DYEE…KERK). Positions 733-750 (EETDNEDEEEIEGDELEV) are enriched in acidic residues. Residues 751–761 (HEEPEASHDTR) show a composition bias toward basic and acidic residues. 2 stretches are compositionally biased toward acidic residues: residues 767-791 (EEFE…ETTV) and 892-919 (DYEE…EEGE). 2 adenylate kinase regions span residues 992 to 1203 (LRIC…ELIL) and 1412 to 1601 (IRII…KNVQ). 1001 to 1006 (GSGKTM) lines the ATP pocket. Residues 1021 to 1052 (QFEEVLQEKLLLKTEKKVGPEFEEDSENEQAA) are NMP 2. Residues 1050–1052 (QAA) and 1079–1082 (VQLT) each bind AMP. The interval 1124–1144 (DGFPRYPEEAQFLGDRGFFPD) is LID 2. ATP is bound at residue 1421–1426 (KSGKTT). Positions 1441–1472 (SIGGALRYVLNNHPETELALMLNWHLHKGMTA) are NMP 3. Residues R1447, 1470–1472 (MTA), 1499–1502 (GYPV), Q1506, and R1543 contribute to the AMP site. Positions 1536-1550 (LEKENEQRLPYPLHN) are LID 3.

It belongs to the adenylate kinase family.

The protein resides in the cytoplasm. The protein localises to the nucleus. Its subcellular location is the cell projection. It localises to the cilium. It is found in the flagellum. It carries out the reaction a ribonucleoside 5'-phosphate + ATP = a ribonucleoside 5'-diphosphate + ADP. The enzyme catalyses AMP + ATP = 2 ADP. It catalyses the reaction GTP + AMP = GDP + ADP. The catalysed reaction is CMP + ATP = CDP + ADP. It carries out the reaction GTP + CMP = CDP + GDP. The enzyme catalyses dAMP + ATP = dADP + ADP. It catalyses the reaction dCMP + ATP = dCDP + ADP. The catalysed reaction is a ribonucleoside 5'-diphosphate + ATP = a ribonucleoside 5'-triphosphate + ADP. It carries out the reaction CDP + ATP = CTP + ADP. The enzyme catalyses CDP + GTP = CTP + GDP. It catalyses the reaction GDP + ATP = GTP + ADP. The catalysed reaction is UDP + ATP = UTP + ADP. It carries out the reaction GTP + UDP = UTP + GDP. The enzyme catalyses dTDP + GTP = dTTP + GDP. It catalyses the reaction dCDP + ATP = dCTP + ADP. The catalysed reaction is dCDP + GTP = dCTP + GDP. It carries out the reaction dGDP + ATP = dGTP + ADP. The enzyme catalyses dTDP + ATP = dTTP + ADP. It catalyses the reaction dADP + GTP = dATP + GDP. Broad-specificity nucleoside phosphate kinase involved in cellular nucleotide homeostasis by catalyzing nucleoside-phosphate interconversions. Similar to other adenylate kinases, preferentially catalyzes the phosphorylation of the nucleoside monophosphate AMP with ATP as phosphate donor to produce ADP. In vitro, can also catalyze the phosphorylation of CMP, dAMP and dCMP and use GTP as an alternate phosphate donor. Moreover, exhibits a diphosphate kinase activity, producing ATP, CTP, GTP, UTP, TTP, dATP, dCTP and dGTP from the corresponding diphosphate substrates with either ATP or GTP as phosphate donors. For this activity shows the following substrate preference CDP &gt; UDP &gt; ADP &gt; TDP. The polypeptide is Adenylate kinase 9 (Homo sapiens (Human)).